The chain runs to 412 residues: Peptidyl-prolyl cis-trans isomerase FKBP8 (412 aa).

The segment at Met-1–Gln-68 is disordered. Over residues Glu-22 to Ser-50 the composition is skewed to acidic residues. A PPIase FKBP-type domain is found at Gly-120–Val-204. Ca(2+) contacts are provided by Asp-149 and Asp-151. The TPR 1 repeat unit spans residues Ala-221–Ser-254. Glycyl lysine isopeptide (Lys-Gly) (interchain with G-Cter in ubiquitin) cross-links involve residues Lys-249, Lys-271, Lys-273, and Lys-284. 2 TPR repeats span residues Val-272 to Asn-305 and Ile-306 to Asn-339. Ser-296 is modified (phosphoserine). Glycyl lysine isopeptide (Lys-Gly) (interchain with G-Cter in ubiquitin) cross-links involve residues Lys-307, Lys-314, Lys-334, Lys-340, Lys-348, Lys-351, and Lys-352. The chain crosses the membrane as a helical span at residues Trp-390–Ala-410.

As to quaternary structure, homomultimers or heteromultimers (Potential). Forms heterodimer with calmodulin. When activated by calmodulin and calcium, interacts with the BH4 domain of BCL2 and weakly with BCL2L1/BCLX isoform Bcl-X(L). Does not bind and inhibit calcineurin. Interacts with ZFYVE27; may negatively regulate ZFYVE27 phosphorylation. (Microbial infection) Interacts with hepatitis C/HCV protein NS5A. Ca(2+) is required as a cofactor. Post-translationally, ubiquitinated by PRKN during mitophagy, leading to its degradation and enhancement of mitophagy. Deubiquitinated by USP30. As to expression, widely expressed. Highest levels seen in the brain. Highly abundant in the retina.

The protein localises to the mitochondrion. Its subcellular location is the mitochondrion membrane. The enzyme catalyses [protein]-peptidylproline (omega=180) = [protein]-peptidylproline (omega=0). In terms of biological role, constitutively inactive PPiase, which becomes active when bound to calmodulin and calcium. Seems to act as a chaperone for BCL2, targets it to the mitochondria and modulates its phosphorylation state. The BCL2/FKBP8/calmodulin/calcium complex probably interferes with the binding of BCL2 to its targets. The active form of FKBP8 may therefore play a role in the regulation of apoptosis. Involved in the inhibition of viral infection by influenza A viruses (IAV). The polypeptide is Peptidyl-prolyl cis-trans isomerase FKBP8 (FKBP8) (Homo sapiens (Human)).